Reading from the N-terminus, the 107-residue chain is Universal stress protein B homolog (107 aa).

Helical transmembrane passes span 6–26 (TILF…LTAL) and 86–106 (VREL…AAFI).

The protein belongs to the universal stress protein B family.

The protein resides in the cell inner membrane. The polypeptide is Universal stress protein B homolog (Vibrio parahaemolyticus serotype O3:K6 (strain RIMD 2210633)).